Reading from the N-terminus, the 554-residue chain is 2-succinyl-5-enolpyruvyl-6-hydroxy-3-cyclohexene-1-carboxylate synthase (554 aa).

The protein belongs to the TPP enzyme family. MenD subfamily. As to quaternary structure, homodimer. Mg(2+) serves as cofactor. It depends on Mn(2+) as a cofactor. The cofactor is thiamine diphosphate.

It catalyses the reaction isochorismate + 2-oxoglutarate + H(+) = 5-enolpyruvoyl-6-hydroxy-2-succinyl-cyclohex-3-ene-1-carboxylate + CO2. Its pathway is quinol/quinone metabolism; 1,4-dihydroxy-2-naphthoate biosynthesis; 1,4-dihydroxy-2-naphthoate from chorismate: step 2/7. It functions in the pathway quinol/quinone metabolism; menaquinone biosynthesis. Its function is as follows. Catalyzes the thiamine diphosphate-dependent decarboxylation of 2-oxoglutarate and the subsequent addition of the resulting succinic semialdehyde-thiamine pyrophosphate anion to isochorismate to yield 2-succinyl-5-enolpyruvyl-6-hydroxy-3-cyclohexene-1-carboxylate (SEPHCHC). The sequence is that of 2-succinyl-5-enolpyruvyl-6-hydroxy-3-cyclohexene-1-carboxylate synthase from Mycobacterium tuberculosis (strain ATCC 25177 / H37Ra).